The chain runs to 531 residues: HERV-H LTR-associating protein 1 (531 aa).

The signal sequence occupies residues M1 to G29. N79, N143, and N161 each carry an N-linked (GlcNAc...) asparagine glycan. Disordered regions lie at residues G231–E289 and E340–E362. Polar residues-rich tracts occupy residues T232–W269 and E349–E362.

The protein localises to the secreted. The sequence is that of HERV-H LTR-associating protein 1 (HHLA1) from Homo sapiens (Human).